The sequence spans 94 residues: Acylphosphatase (94 aa).

The region spanning 8–94 (RLTAWVHGRV…REQITGFHER (87 aa)) is the Acylphosphatase-like domain. Active-site residues include Arg23 and Asn41.

It belongs to the acylphosphatase family.

It carries out the reaction an acyl phosphate + H2O = a carboxylate + phosphate + H(+). The polypeptide is Acylphosphatase (acyP) (Mycobacterium sp. (strain JLS)).